Here is a 512-residue protein sequence, read N- to C-terminus: Cobyric acid synthase (512 aa).

The GATase cobBQ-type domain occupies 251-451 (ALDIAVIRLP…IHGLFDSHHF (201 aa)). The Nucleophile role is filled by Cys332. Residue His443 is part of the active site.

It belongs to the CobB/CobQ family. CobQ subfamily.

Its pathway is cofactor biosynthesis; adenosylcobalamin biosynthesis. Its function is as follows. Catalyzes amidations at positions B, D, E, and G on adenosylcobyrinic A,C-diamide. NH(2) groups are provided by glutamine, and one molecule of ATP is hydrogenolyzed for each amidation. The protein is Cobyric acid synthase of Yersinia enterocolitica serotype O:8 / biotype 1B (strain NCTC 13174 / 8081).